A 779-amino-acid chain; its full sequence is Abnormal cell migration protein 10 (779 aa).

Residues 78 to 97 (NELEADTEEDIAETADDEES) are compositionally biased toward acidic residues. Disordered stretches follow at residues 78–105 (NELE…EKTE), 189–217 (SSSR…PQQP), and 242–302 (AASS…NAEE). Over residues 189 to 200 (SSSRENVKSIST) the composition is skewed to polar residues. Residues 242-254 (AASSCSSPDGDSA) show a composition bias toward low complexity. A compositionally biased stretch (polar residues) spans 256-293 (GDSSSTESSNNRCRNSAFSSNDSCRDSLNTPSPTQVSP). Positions 317–407 (EAKVTKIFVK…NKLYFMRRPD (91 aa)) constitute a Ras-associating domain. The PH domain occupies 456–566 (PPEMEGFLYL…WLVALRIAKN (111 aa)). Composition is skewed to polar residues over residues 645 to 660 (SFSV…SRTS) and 688 to 698 (RASTSSPTIPQ). The disordered stretch occupies residues 645–763 (SFSVNSCQQS…SPMAPAKNDL (119 aa)). The segment covering 708–729 (PAPPPVASVMRMPPPVTPPKPC) has biased composition (pro residues).

It belongs to the MRL family. In terms of assembly, may interact (via Ras-associating and PH domains) with ced-10 (GTP-bound form).

The protein localises to the perikaryon. Functionally, required cell non-autonomously for proper development of the excretory canals and for the long-range anterior-posterior migrations of embryonic neurons CAN, ALM and HSN. Plays a role, probably downstream of ced-10/rac1, in orientating axonal growth of HSN and AVM neurons in response to guidance cues such as slt-1. May regulate growth cone polarization by promoting asymmetric F-actin assembly. May be involved in signal transduction during cell migration. The chain is Abnormal cell migration protein 10 from Caenorhabditis elegans.